The primary structure comprises 241 residues: Viral CASP8 and FADD-like apoptosis regulator (241 aa).

2 consecutive DED domains span residues 8–78 (PSLP…SRFG) and 95–175 (RYRK…QLVE). The interval 212-241 (CMPVQESSDSPELLRTPVQESSSDSPEQTT) is disordered. Residues 229-241 (VQESSSDSPEQTT) are compositionally biased toward polar residues.

As to quaternary structure, associates with the death-inducing signaling complex (DISC) formed by TNFRSF6/FAS, FADD and CASP8. Interacts with FADD. Interacts with host TRAF2. Interacts with host NEMO/IKBKG (via N-terminus). Interacts with host SH3BP4; this interaction plays an important in the suppression of host autophagy.

The protein resides in the host cytoplasm. It localises to the host nucleus. Inhibits TNFRSF1A, TNFRSF6/FAS and TNFRSF12 induced apoptosis. Directs the degradation of host NFKBIB but not NFKBIA. Also suppresses host NF-kappa-B activation by interacting with and preventing ubiquitination of host NEMO/IKBKG, the NF-kappa-B essential modulator subunit of the IKK complex. Interferes with host CASP8/caspase-8 recruitment and activation at the death-inducing signaling complex (DISC). May lead to higher virus production and contribute to virus persistence and oncogenicity. Also participates in the inhibition of host autophagy by interacting with host SH3BP4. In Homo sapiens (Human), this protein is Viral CASP8 and FADD-like apoptosis regulator.